A 359-amino-acid polypeptide reads, in one-letter code: Peptide chain release factor 1 (359 aa).

The residue at position 235 (glutamine 235) is an N5-methylglutamine.

The protein belongs to the prokaryotic/mitochondrial release factor family. In terms of processing, methylated by PrmC. Methylation increases the termination efficiency of RF1.

The protein resides in the cytoplasm. Functionally, peptide chain release factor 1 directs the termination of translation in response to the peptide chain termination codons UAG and UAA. This chain is Peptide chain release factor 1, found in Verminephrobacter eiseniae (strain EF01-2).